We begin with the raw amino-acid sequence, 319 residues long: Ribonuclease Z (319 aa).

Residues His62, His64, Asp66, His67, His145, Asp215, and His273 each coordinate Zn(2+). Asp66 functions as the Proton acceptor in the catalytic mechanism.

It belongs to the RNase Z family. As to quaternary structure, homodimer. Zn(2+) serves as cofactor.

It carries out the reaction Endonucleolytic cleavage of RNA, removing extra 3' nucleotides from tRNA precursor, generating 3' termini of tRNAs. A 3'-hydroxy group is left at the tRNA terminus and a 5'-phosphoryl group is left at the trailer molecule.. Its function is as follows. Zinc phosphodiesterase, which displays some tRNA 3'-processing endonuclease activity. Probably involved in tRNA maturation, by removing a 3'-trailer from precursor tRNA. In Borrelia garinii subsp. bavariensis (strain ATCC BAA-2496 / DSM 23469 / PBi) (Borreliella bavariensis), this protein is Ribonuclease Z.